Reading from the N-terminus, the 518-residue chain is Probable lysine--tRNA ligase, cytoplasmic (518 aa).

Belongs to the class-II aminoacyl-tRNA synthetase family. As to quaternary structure, homodimer.

The protein localises to the cytoplasm. The enzyme catalyses tRNA(Lys) + L-lysine + ATP = L-lysyl-tRNA(Lys) + AMP + diphosphate. The polypeptide is Probable lysine--tRNA ligase, cytoplasmic (Enterocytozoon bieneusi (strain H348) (Microsporidian parasite)).